Here is a 294-residue protein sequence, read N- to C-terminus: Elongation factor Ts (294 aa).

Residues 82–85 (TDFV) are involved in Mg(2+) ion dislocation from EF-Tu.

It belongs to the EF-Ts family.

The protein resides in the cytoplasm. Associates with the EF-Tu.GDP complex and induces the exchange of GDP to GTP. It remains bound to the aminoacyl-tRNA.EF-Tu.GTP complex up to the GTP hydrolysis stage on the ribosome. The sequence is that of Elongation factor Ts from Psychrobacter cryohalolentis (strain ATCC BAA-1226 / DSM 17306 / VKM B-2378 / K5).